Consider the following 38-residue polypeptide: Large ribosomal subunit protein bL36 (38 aa).

Belongs to the bacterial ribosomal protein bL36 family.

This is Large ribosomal subunit protein bL36 from Pseudoalteromonas atlantica (strain T6c / ATCC BAA-1087).